Reading from the N-terminus, the 159-residue chain is uncharacterized protein (159 aa).

The 61-residue stretch at 6-66 folds into the HTH asnC-type domain; the sequence is LSKKDWEIIK…YLRFDKLGYT (61 aa). Residues 25–44 constitute a DNA-binding region (H-T-H motif); that stretch reads DAEIGRRIGLSKSAVRWRRI.

This is an uncharacterized protein from Pyrococcus horikoshii (strain ATCC 700860 / DSM 12428 / JCM 9974 / NBRC 100139 / OT-3).